The chain runs to 962 residues: Translation initiation factor IF-2 (962 aa).

Disordered stretches follow at residues Glu122–Arg263, Thr293–Lys327, and Ile341–Pro362. Residues Ala156–Val173 show a composition bias toward low complexity. The segment covering Lys188–Pro202 has biased composition (basic and acidic residues). A compositionally biased stretch (basic residues) spans Arg244 to Val256. 2 stretches are compositionally biased toward basic and acidic residues: residues Arg308–Lys327 and Gln344–Pro362. The tr-type G domain maps to Arg455–Lys624. The segment at Gly464–Thr471 is G1. Gly464–Thr471 provides a ligand contact to GTP. The interval Gly489–His493 is G2. Residues Asp510–Gly513 form a G3 region. Residues Asp510–His514 and Asn564–Asp567 each bind GTP. The segment at Asn564–Asp567 is G4. Residues Ser600 to Lys602 are G5.

This sequence belongs to the TRAFAC class translation factor GTPase superfamily. Classic translation factor GTPase family. IF-2 subfamily.

The protein localises to the cytoplasm. In terms of biological role, one of the essential components for the initiation of protein synthesis. Protects formylmethionyl-tRNA from spontaneous hydrolysis and promotes its binding to the 30S ribosomal subunits. Also involved in the hydrolysis of GTP during the formation of the 70S ribosomal complex. The polypeptide is Translation initiation factor IF-2 (Syntrophobacter fumaroxidans (strain DSM 10017 / MPOB)).